The sequence spans 357 residues: Protein RecA (357 aa).

67 to 74 (GPESSGKT) provides a ligand contact to ATP. The segment at 334-357 (ELKPAAAGNSHDEDELAGEGKEEF) is disordered.

The protein belongs to the RecA family.

It is found in the cytoplasm. In terms of biological role, can catalyze the hydrolysis of ATP in the presence of single-stranded DNA, the ATP-dependent uptake of single-stranded DNA by duplex DNA, and the ATP-dependent hybridization of homologous single-stranded DNAs. It interacts with LexA causing its activation and leading to its autocatalytic cleavage. In Pectobacterium atrosepticum (strain SCRI 1043 / ATCC BAA-672) (Erwinia carotovora subsp. atroseptica), this protein is Protein RecA.